A 79-amino-acid polypeptide reads, in one-letter code: Omega-phylotoxin-To1a (79 aa).

A signal peptide spans 1–21 (MKKTFCFILILVCIVLKSVNA). Positions 22–38 (EEEDNFEESSLEMETAR) are excised as a propeptide. 4 disulfides stabilise this stretch: cysteine 39-cysteine 59, cysteine 46-cysteine 63, cysteine 58-cysteine 78, and cysteine 65-cysteine 76.

In terms of tissue distribution, expressed by the venom duct.

The protein localises to the secreted. In terms of biological role, insect-specific toxin that probably acts as an inhibitor of presynaptic insect calcium channels, presumably Cav2 subtype. In vivo, induces immediate paralysis on insects, followed by death when high doses are injected. The protein is Omega-phylotoxin-To1a of Tibellus oblongus (Oblong running crab spider).